The sequence spans 76 residues: Acyl carrier protein (76 aa).

In terms of domain architecture, Carrier spans 1-76; the sequence is MSVEEKVKKI…DAIDYVSNKQ (76 aa). The residue at position 36 (serine 36) is an O-(pantetheine 4'-phosphoryl)serine.

The protein belongs to the acyl carrier protein (ACP) family. In terms of processing, 4'-phosphopantetheine is transferred from CoA to a specific serine of apo-ACP by AcpS. This modification is essential for activity because fatty acids are bound in thioester linkage to the sulfhydryl of the prosthetic group.

The protein localises to the cytoplasm. The protein operates within lipid metabolism; fatty acid biosynthesis. Carrier of the growing fatty acid chain in fatty acid biosynthesis. The chain is Acyl carrier protein from Nitratidesulfovibrio vulgaris (strain ATCC 29579 / DSM 644 / CCUG 34227 / NCIMB 8303 / VKM B-1760 / Hildenborough) (Desulfovibrio vulgaris).